A 334-amino-acid polypeptide reads, in one-letter code: Dual specificity mitogen-activated protein kinase kinase 6 (334 aa).

Basic residues predominate over residues 1 to 11; sequence MSQSKGKKRNP. The disordered stretch occupies residues 1–34; sequence MSQSKGKKRNPGLKIPKEAFEQPQTSSTPPRDLD. The d domain stretch occupies residues 4-19; the sequence is SKGKKRNPGLKIPKEA. The 262-residue stretch at 53-314 folds into the Protein kinase domain; sequence LEPIVELGRG…YPELMQHPFF (262 aa). Residues 59 to 67 and K82 contribute to the ATP site; that span reads LGRGAYGVV. The active-site Proton acceptor is D179. Residue S207 is modified to Phosphoserine; by MAPK3. T211 carries the post-translational modification Phosphothreonine; by MAPK3. Residues 311–334 are DVD domain; that stretch reads HPFFTLHESKATDVASFVKSILGD.

Belongs to the protein kinase superfamily. STE Ser/Thr protein kinase family. MAP kinase kinase subfamily. Dimer. Interacts (via its D domain) with its substrates MAPK11, MAPK12, MAPK13 and MAPK14. Interacts (via its DVD domain) with MAP3Ks activators like MAP3K5/ASK1, MAP3K1/MEKK1, MAP3K2/MEKK2, MAP3K3/MEKK3, MAP3K4/MEKK4, MAP3K7/TAK1, MAP3K11/MLK3 and MAP3K17/TAOK2. Interacts with DCTN1. Interacts with EIF2AK2/PKR. In terms of processing, weakly autophosphorylated. Phosphorylated at Ser-207 and Thr-211 by the majority of M3Ks, such as MAP3K5/ASK1, MAP3K1/MEKK1, MAP3K2/MEKK2, MAP3K3/MEKK3, MAP3K4/MEKK4, MAP3K7/TAK1, MAP3K11/MLK3 and MAP3K17/TAOK2. Post-translationally, in response to genotoxic stress, MAP3K-phosphorylated MAP2K6 is ubiquitinated and degraded by the SCF(FBXO31) complex.

The protein resides in the nucleus. It localises to the cytoplasm. Its subcellular location is the cytoskeleton. It carries out the reaction L-seryl-[protein] + ATP = O-phospho-L-seryl-[protein] + ADP + H(+). It catalyses the reaction L-threonyl-[protein] + ATP = O-phospho-L-threonyl-[protein] + ADP + H(+). The catalysed reaction is L-tyrosyl-[protein] + ATP = O-phospho-L-tyrosyl-[protein] + ADP + H(+). Its activity is regulated as follows. Activated by dual phosphorylation on Ser-207 and Thr-211 in response to a variety of cellular stresses, including UV radiation, osmotic shock, hypoxia, inflammatory cytokines, interferon gamma (IFNG), and less often by growth factors. MAP2K6/MKK6 is activated by the majority of M3Ks, such as MAP3K5/ASK1, MAP3K1/MEKK1, MAP3K2/MEKK2, MAP3K3/MEKK3, MAP3K4/MEKK4, MAP3K7/TAK1, MAP3K11/MLK3 and MAP3K17/TAOK2. Its function is as follows. Dual specificity protein kinase which acts as an essential component of the MAP kinase signal transduction pathway. With MAP3K3/MKK3, catalyzes the concomitant phosphorylation of a threonine and a tyrosine residue in the MAP kinases p38 MAPK11, MAPK12, MAPK13 and MAPK14 and plays an important role in the regulation of cellular responses to cytokines and all kinds of stresses. Especially, MAP2K3/MKK3 and MAP2K6/MKK6 are both essential for the activation of MAPK11 and MAPK13 induced by environmental stress, whereas MAP2K6/MKK6 is the major MAPK11 activator in response to TNF. MAP2K6/MKK6 also phosphorylates and activates PAK6. The p38 MAP kinase signal transduction pathway leads to direct activation of transcription factors. Nuclear targets of p38 MAP kinase include the transcription factors ATF2 and ELK1. Within the p38 MAPK signal transduction pathway, MAP3K6/MKK6 mediates phosphorylation of STAT4 through MAPK14 activation, and is therefore required for STAT4 activation and STAT4-regulated gene expression in response to IL-12 stimulation. The pathway is also crucial for IL-6-induced SOCS3 expression and down-regulation of IL-6-mediated gene induction; and for IFNG-dependent gene transcription. Has a role in osteoclast differentiation through NF-kappa-B transactivation by TNFSF11, and in endochondral ossification and since SOX9 is another likely downstream target of the p38 MAPK pathway. MAP2K6/MKK6 mediates apoptotic cell death in thymocytes. Acts also as a regulator for melanocytes dendricity, through the modulation of Rho family GTPases. The chain is Dual specificity mitogen-activated protein kinase kinase 6 (MAP2K6) from Bos taurus (Bovine).